The sequence spans 687 residues: Putative lipase YDR444W (687 aa).

S284 acts as the Charge relay system in catalysis. Disordered regions lie at residues I429–P472, K491–V513, and E650–T687. Low complexity predominate over residues S436–N463. Over residues R670–K681 the composition is skewed to basic and acidic residues.

This sequence belongs to the putative lipase ROG1 family.

It is found in the cytoplasm. In Saccharomyces cerevisiae (strain ATCC 204508 / S288c) (Baker's yeast), this protein is Putative lipase YDR444W.